We begin with the raw amino-acid sequence, 261 residues long: Zaragozic acid A biosynthesis cluster protein 8 (261 aa).

The segment covering G242–R254 has biased composition (polar residues). The tract at residues G242 to G261 is disordered.

Its pathway is secondary metabolite biosynthesis. Part of the gene cluster that mediates the biosynthesis of squalestatin S1 (SQS1, also known as zaragozic acid A), a heavily oxidized fungal polyketide that offers potent cholesterol lowering activity by targeting squalene synthase (SS). SQS1 is composed of a 2,8-dioxobicyclic[3.2.1]octane-3,4,5-tricarboxyclic acid core that is connected to two lipophilic polyketide arms. These initial steps feature the priming of an unusual benzoic acid starter unit onto the highly reducing polyketide synthase clz14, followed by oxaloacetate extension and product release to generate a tricarboxylic acid containing product. The phenylalanine ammonia lyase (PAL) clz10 and the acyl-CoA ligase clz12 are involved in transforming phenylalanine into benzoyl-CoA. The citrate synthase-like protein clz17 is involved in connecting the C-alpha-carbons of the hexaketide chain and oxaloacetate to afford the tricarboxylic acid unit. The potential hydrolytic enzymes, clz11 and clz13, are in close proximity to pks2 and may participate in product release. On the other side, the tetraketide arm is synthesized by a the squalestatin tetraketide synthase clz2 and enzymatically esterified to the core in the last biosynthetic step, by the acetyltransferase clz6. The biosynthesis of the tetraketide must involve 3 rounds of chain extension. After the first and second rounds methyl-transfer occurs, and in all rounds of extension the ketoreductase and dehydratase are active. The enoyl reductase and C-MeT of clz2 are not active in the final round of extension. The acetyltransferase clz6 appears to have a broad substrate selectivity for its acyl CoA substrate, allowing the in vitro synthesis of novel squalestatins. The biosynthesis of SQS1 requires several oxidative steps likely performed by oxidoreductases clz3, clz15 and clz16. Finally, in support of the identification of the cluster as being responsible for SQS1 production, the cluster contains a gene encoding a putative squalene synthase (SS) clz20, suggesting a likely mechanism for self-resistance. The chain is Zaragozic acid A biosynthesis cluster protein 8 from Cochliobolus lunatus (Filamentous fungus).